The primary structure comprises 683 residues: DNA-directed RNA polymerase subunit beta' (683 aa).

The Zn(2+) site is built by cysteine 69, cysteine 71, cysteine 87, and cysteine 90. Residues aspartate 489, aspartate 491, and aspartate 493 each coordinate Mg(2+).

Belongs to the RNA polymerase beta' chain family. RpoC1 subfamily. In plastids the minimal PEP RNA polymerase catalytic core is composed of four subunits: alpha, beta, beta', and beta''. When a (nuclear-encoded) sigma factor is associated with the core the holoenzyme is formed, which can initiate transcription. It depends on Mg(2+) as a cofactor. The cofactor is Zn(2+).

The protein resides in the plastid. It localises to the chloroplast. It carries out the reaction RNA(n) + a ribonucleoside 5'-triphosphate = RNA(n+1) + diphosphate. In terms of biological role, DNA-dependent RNA polymerase catalyzes the transcription of DNA into RNA using the four ribonucleoside triphosphates as substrates. The polypeptide is DNA-directed RNA polymerase subunit beta' (Sorghum bicolor (Sorghum)).